The sequence spans 469 residues: Extracellular endo-alpha-(1-&gt;5)-L-arabinanase 2 (469 aa).

An N-terminal signal peptide occupies residues 1–26 (MFNRLFRVCFLAALIMAFTLPNSVYA). Asp-38 functions as the Proton acceptor in the catalytic mechanism. Substrate-binding positions include Asp-38, Asp-122, 168–171 (NVVD), 188–190 (SYS), and 220–224 (HSRIE). The active-site Proton donor is Glu-224. Residue His-318 participates in Ca(2+) binding.

It belongs to the glycosyl hydrolase 43 family. Homodimer. Requires Ca(2+) as cofactor.

The protein resides in the secreted. It carries out the reaction Endohydrolysis of (1-&gt;5)-alpha-arabinofuranosidic linkages in (1-&gt;5)-arabinans.. The protein operates within glycan metabolism; L-arabinan degradation. Involved in the degradation of arabinan and is a key enzyme in the complete degradation of the plant cell wall. Catalyzes the internal cleavage of alpha-(1-&gt;5)-L-arabinofuranosyl residues of the alpha-1,5-L-arabinan to produce arabino-oligosaccharides and L-arabinose. It is also active toward linear branched sugar beet arabinan, and pectin from apple. This Bacillus subtilis (strain 168) protein is Extracellular endo-alpha-(1-&gt;5)-L-arabinanase 2 (abn2).